Here is a 478-residue protein sequence, read N- to C-terminus: Bifunctional protein HldE (478 aa).

The segment at 1–318 (MKVTLPDFRQ…ENAIRGRADT (318 aa)) is ribokinase. Residue 195 to 198 (NLSE) participates in ATP binding. The active site involves Asp264. Residues 344–478 (MTNGCFDILH…NMIKASTSQS (135 aa)) are cytidylyltransferase.

It in the N-terminal section; belongs to the carbohydrate kinase PfkB family. This sequence in the C-terminal section; belongs to the cytidylyltransferase family. As to quaternary structure, homodimer.

The enzyme catalyses D-glycero-beta-D-manno-heptose 7-phosphate + ATP = D-glycero-beta-D-manno-heptose 1,7-bisphosphate + ADP + H(+). The catalysed reaction is D-glycero-beta-D-manno-heptose 1-phosphate + ATP + H(+) = ADP-D-glycero-beta-D-manno-heptose + diphosphate. It functions in the pathway nucleotide-sugar biosynthesis; ADP-L-glycero-beta-D-manno-heptose biosynthesis; ADP-L-glycero-beta-D-manno-heptose from D-glycero-beta-D-manno-heptose 7-phosphate: step 1/4. The protein operates within nucleotide-sugar biosynthesis; ADP-L-glycero-beta-D-manno-heptose biosynthesis; ADP-L-glycero-beta-D-manno-heptose from D-glycero-beta-D-manno-heptose 7-phosphate: step 3/4. Its function is as follows. Catalyzes the phosphorylation of D-glycero-D-manno-heptose 7-phosphate at the C-1 position to selectively form D-glycero-beta-D-manno-heptose-1,7-bisphosphate. Catalyzes the ADP transfer from ATP to D-glycero-beta-D-manno-heptose 1-phosphate, yielding ADP-D-glycero-beta-D-manno-heptose. The protein is Bifunctional protein HldE of Pectobacterium atrosepticum (strain SCRI 1043 / ATCC BAA-672) (Erwinia carotovora subsp. atroseptica).